A 283-amino-acid chain; its full sequence is ATP synthase gamma chain (283 aa).

It belongs to the ATPase gamma chain family. F-type ATPases have 2 components, CF(1) - the catalytic core - and CF(0) - the membrane proton channel. CF(1) has five subunits: alpha(3), beta(3), gamma(1), delta(1), epsilon(1). CF(0) has three main subunits: a, b and c.

The protein resides in the cell membrane. In terms of biological role, produces ATP from ADP in the presence of a proton gradient across the membrane. The gamma chain is believed to be important in regulating ATPase activity and the flow of protons through the CF(0) complex. The polypeptide is ATP synthase gamma chain (Desulforamulus reducens (strain ATCC BAA-1160 / DSM 100696 / MI-1) (Desulfotomaculum reducens)).